The following is a 309-amino-acid chain: Tagatose-6-phosphate kinase (309 aa).

Belongs to the carbohydrate kinase PfkB family. LacC subfamily.

The catalysed reaction is D-tagatofuranose 6-phosphate + ATP = D-tagatofuranose 1,6-bisphosphate + ADP + H(+). It functions in the pathway carbohydrate metabolism; D-tagatose 6-phosphate degradation; D-glyceraldehyde 3-phosphate and glycerone phosphate from D-tagatose 6-phosphate: step 1/2. The polypeptide is Tagatose-6-phosphate kinase (Streptococcus pyogenes serotype M3 (strain SSI-1)).